We begin with the raw amino-acid sequence, 394 residues long: DNA primase large subunit PriL (394 aa).

4 residues coordinate [4Fe-4S] cluster: cysteine 231, cysteine 340, cysteine 351, and cysteine 357.

Belongs to the eukaryotic-type primase large subunit family. In terms of assembly, heterodimer of a small subunit (PriS) and a large subunit (PriL). The cofactor is [4Fe-4S] cluster.

In terms of biological role, regulatory subunit of DNA primase, an RNA polymerase that catalyzes the synthesis of short RNA molecules used as primers for DNA polymerase during DNA replication. Stabilizes and modulates the activity of the small subunit, increasing the rate of DNA synthesis, and conferring RNA synthesis capability. The DNA polymerase activity may enable DNA primase to also catalyze primer extension after primer synthesis. May also play a role in DNA repair. This is DNA primase large subunit PriL from Pyrococcus horikoshii (strain ATCC 700860 / DSM 12428 / JCM 9974 / NBRC 100139 / OT-3).